A 717-amino-acid chain; its full sequence is Scinderin (717 aa).

An actin-severing region spans residues methionine 1–glutamate 363. One copy of the Gelsolin-like 1 repeat lies at glutamate 28–valine 108. A 1,2-diacyl-sn-glycero-3-phospho-(1D-myo-inositol-4,5-bisphosphate)-binding positions include lysine 112–alanine 119 and arginine 138–arginine 146. Gelsolin-like repeat units lie at residues valine 148–leucine 220, valine 265–phenylalanine 340, arginine 408–leucine 483, alanine 526–tryptophan 590, and isoleucine 628–phenylalanine 703. The tract at residues arginine 364–tryptophan 715 is ca(2+)-dependent actin binding. Ca(2+) is bound by residues asparagine 538, aspartate 539, glutamate 562, aspartate 643, aspartate 644, and glutamate 666.

It belongs to the villin/gelsolin family.

The protein localises to the cytoplasm. It is found in the cytoskeleton. Its subcellular location is the cell projection. The protein resides in the podosome. Ca(2+)-dependent actin filament-severing protein that has a regulatory function in exocytosis by affecting the organization of the microfilament network underneath the plasma membrane. In vitro, also has barbed end capping and nucleating activities in the presence of Ca(2+). Severing activity is inhibited by phosphatidylinositol 4,5-bis-phosphate (PIP2). Required for megakaryocyte differentiation, maturation, polyploidization and apoptosis with the release of platelet-like particles. Plays a role in osteoclastogenesis (OCG) and actin cytoskeletal organization in osteoclasts. Regulates chondrocyte proliferation and differentiation. Inhibits cell proliferation and tumorigenesis. Signaling is mediated by MAPK, p38 and JNK pathways. The chain is Scinderin (SCIN) from Gallus gallus (Chicken).